Here is a 1911-residue protein sequence, read N- to C-terminus: Protein TIC 214 (1911 aa).

6 helical membrane-spanning segments follow: residues 41–61 (IINS…FSIG), 81–103 (ISAT…YAPL), 108–128 (GKPH…FFWN), 147–167 (FNIQ…HFIL), 195–215 (IGWL…LFWI), and 238–258 (IFSI…PLPI). Disordered regions lie at residues 265–299 (ETSE…STEE), 798–817 (DSEE…KEEN), and 1599–1647 (NQNQ…RKKK). Residues 268–297 (ETEESEENEEESDIEITSEPKEQDEEEGST) are compositionally biased toward acidic residues. 2 stretches are compositionally biased toward basic and acidic residues: residues 1603 to 1615 (QEKK…RDLG) and 1623 to 1635 (QKQK…EKNY).

Belongs to the TIC214 family. As to quaternary structure, part of the Tic complex.

The protein resides in the plastid. The protein localises to the chloroplast inner membrane. Functionally, involved in protein precursor import into chloroplasts. May be part of an intermediate translocation complex acting as a protein-conducting channel at the inner envelope. The polypeptide is Protein TIC 214 (Lemna minor (Common duckweed)).